The following is a 379-amino-acid chain: Bifunctional enzyme IspD/IspF (379 aa).

A 2-C-methyl-D-erythritol 4-phosphate cytidylyltransferase region spans residues 1-213 (MSQVSLVVMG…QGFEPPFGGC (213 aa)). The tract at residues 214–379 (YGGSGFDVHA…DWTKHACFNR (166 aa)) is 2-C-methyl-D-erythritol 2,4-cyclodiphosphate synthase. Aspartate 220 and histidine 222 together coordinate a divalent metal cation. 4-CDP-2-C-methyl-D-erythritol 2-phosphate-binding positions include 220–222 (DVH) and 246–247 (HS). Histidine 254 is a binding site for a divalent metal cation. 4-CDP-2-C-methyl-D-erythritol 2-phosphate contacts are provided by residues 268-270 (DIG), 273-277 (FPDSD), 344-347 (TTTE), phenylalanine 351, and arginine 354.

The protein in the N-terminal section; belongs to the IspD/TarI cytidylyltransferase family. IspD subfamily. In the C-terminal section; belongs to the IspF family. A divalent metal cation serves as cofactor.

It carries out the reaction 2-C-methyl-D-erythritol 4-phosphate + CTP + H(+) = 4-CDP-2-C-methyl-D-erythritol + diphosphate. The catalysed reaction is 4-CDP-2-C-methyl-D-erythritol 2-phosphate = 2-C-methyl-D-erythritol 2,4-cyclic diphosphate + CMP. Its pathway is isoprenoid biosynthesis; isopentenyl diphosphate biosynthesis via DXP pathway; isopentenyl diphosphate from 1-deoxy-D-xylulose 5-phosphate: step 2/6. The protein operates within isoprenoid biosynthesis; isopentenyl diphosphate biosynthesis via DXP pathway; isopentenyl diphosphate from 1-deoxy-D-xylulose 5-phosphate: step 4/6. Functionally, bifunctional enzyme that catalyzes the formation of 4-diphosphocytidyl-2-C-methyl-D-erythritol from CTP and 2-C-methyl-D-erythritol 4-phosphate (MEP) (IspD), and catalyzes the conversion of 4-diphosphocytidyl-2-C-methyl-D-erythritol 2-phosphate (CDP-ME2P) to 2-C-methyl-D-erythritol 2,4-cyclodiphosphate (ME-CPP) with a corresponding release of cytidine 5-monophosphate (CMP) (IspF). This Wolinella succinogenes (strain ATCC 29543 / DSM 1740 / CCUG 13145 / JCM 31913 / LMG 7466 / NCTC 11488 / FDC 602W) (Vibrio succinogenes) protein is Bifunctional enzyme IspD/IspF.